Consider the following 132-residue polypeptide: Urease subunit beta (132 aa).

Belongs to the urease beta subunit family. As to quaternary structure, heterotrimer of UreA (gamma), UreB (beta) and UreC (alpha) subunits. Three heterotrimers associate to form the active enzyme.

The protein localises to the cytoplasm. It catalyses the reaction urea + 2 H2O + H(+) = hydrogencarbonate + 2 NH4(+). It functions in the pathway nitrogen metabolism; urea degradation; CO(2) and NH(3) from urea (urease route): step 1/1. The polypeptide is Urease subunit beta (Natronomonas pharaonis (strain ATCC 35678 / DSM 2160 / CIP 103997 / JCM 8858 / NBRC 14720 / NCIMB 2260 / Gabara) (Halobacterium pharaonis)).